Consider the following 154-residue polypeptide: Myoglobin (154 aa).

Residues 2–148 (GLSDGEWQLV…FRNDMAAKYK (147 aa)) form the Globin domain. Ser4 bears the Phosphoserine mark. Residue His65 participates in nitrite binding. O2 is bound at residue His65. A Phosphothreonine modification is found at Thr68. His94 contributes to the heme b binding site.

Belongs to the globin family. As to quaternary structure, monomeric.

The protein resides in the cytoplasm. The protein localises to the sarcoplasm. The enzyme catalyses Fe(III)-heme b-[protein] + nitric oxide + H2O = Fe(II)-heme b-[protein] + nitrite + 2 H(+). It carries out the reaction H2O2 + AH2 = A + 2 H2O. Monomeric heme protein which primary function is to store oxygen and facilitate its diffusion within muscle tissues. Reversibly binds oxygen through a pentacoordinated heme iron and enables its timely and efficient release as needed during periods of heightened demand. Depending on the oxidative conditions of tissues and cells, and in addition to its ability to bind oxygen, it also has a nitrite reductase activity whereby it regulates the production of bioactive nitric oxide. Under stress conditions, like hypoxia and anoxia, it also protects cells against reactive oxygen species thanks to its pseudoperoxidase activity. The polypeptide is Myoglobin (MB) (Lagothrix lagotricha (Brown woolly monkey)).